The following is a 342-amino-acid chain: Phosphoribosylformylglycinamidine cyclo-ligase (342 aa).

The protein belongs to the AIR synthase family.

It is found in the cytoplasm. The catalysed reaction is 2-formamido-N(1)-(5-O-phospho-beta-D-ribosyl)acetamidine + ATP = 5-amino-1-(5-phospho-beta-D-ribosyl)imidazole + ADP + phosphate + H(+). It functions in the pathway purine metabolism; IMP biosynthesis via de novo pathway; 5-amino-1-(5-phospho-D-ribosyl)imidazole from N(2)-formyl-N(1)-(5-phospho-D-ribosyl)glycinamide: step 2/2. The protein is Phosphoribosylformylglycinamidine cyclo-ligase of Staphylococcus aureus (strain bovine RF122 / ET3-1).